A 96-amino-acid polypeptide reads, in one-letter code: Co-chaperonin GroES (96 aa).

It belongs to the GroES chaperonin family. In terms of assembly, heptamer of 7 subunits arranged in a ring. Interacts with the chaperonin GroEL.

The protein localises to the cytoplasm. Its function is as follows. Together with the chaperonin GroEL, plays an essential role in assisting protein folding. The GroEL-GroES system forms a nano-cage that allows encapsulation of the non-native substrate proteins and provides a physical environment optimized to promote and accelerate protein folding. GroES binds to the apical surface of the GroEL ring, thereby capping the opening of the GroEL channel. This is Co-chaperonin GroES from Shewanella loihica (strain ATCC BAA-1088 / PV-4).